Here is a 733-residue protein sequence, read N- to C-terminus: Arginine decarboxylase 1A, chloroplastic (733 aa).

A chloroplast-targeting transit peptide spans 1–44 (MPALGCCVDAAVSPPPGYSFLWDSSLPAPEIFPSGVPPSTNTAV). N6-(pyridoxal phosphate)lysine is present on Lys157. Pyridoxal 5'-phosphate-binding positions include Ser309, Gly346, and 395 to 398 (ESGR). 460–461 (YA) contributes to the substrate binding site. Cys548 acts as the Proton donor; shared with dimeric partner in catalysis. Asp549 provides a ligand contact to substrate. Residue Tyr592 coordinates pyridoxal 5'-phosphate.

This sequence belongs to the Orn/Lys/Arg decarboxylase class-II family. SpeA subfamily. Interacts, via its C-terminal internal region, with the tobacco mosaic virus (TMV) replicase helicase region. Mg(2+) is required as a cofactor. The cofactor is pyridoxal 5'-phosphate.

Its subcellular location is the plastid. The protein localises to the chloroplast. It carries out the reaction L-arginine + H(+) = agmatine + CO2. It functions in the pathway alkaloid biosynthesis; nicotine biosynthesis. The protein operates within amine and polyamine biosynthesis; agmatine biosynthesis; agmatine from L-arginine: step 1/1. In terms of biological role, involved in the biosynthesis of pyridine alkaloid natural products, leading mainly to the production of anabasine, anatabine, nicotine and nornicotine, effective deterrents against herbivores with antiparasitic and pesticide properties (neurotoxins); nornicotine serves as the precursor in the synthesis of the carcinogen compound N'-nitrosonornicotine (NNN). Required for the biosynthesis of putrescine. Catalyzes the first step of polyamine (PA) biosynthesis to produce putrescine from arginine. This chain is Arginine decarboxylase 1A, chloroplastic, found in Nicotiana tabacum (Common tobacco).